A 482-amino-acid chain; its full sequence is Glutamate--tRNA ligase (482 aa).

The 'HIGH' region motif lies at 9 to 19 (PSPTGPLHIGG). The 'KMSKS' region signature appears at 250–254 (KMSKR). ATP is bound at residue Lys253.

It belongs to the class-I aminoacyl-tRNA synthetase family. Glutamate--tRNA ligase type 1 subfamily. In terms of assembly, monomer.

It is found in the cytoplasm. It catalyses the reaction tRNA(Glu) + L-glutamate + ATP = L-glutamyl-tRNA(Glu) + AMP + diphosphate. Catalyzes the attachment of glutamate to tRNA(Glu) in a two-step reaction: glutamate is first activated by ATP to form Glu-AMP and then transferred to the acceptor end of tRNA(Glu). The chain is Glutamate--tRNA ligase from Desulforamulus reducens (strain ATCC BAA-1160 / DSM 100696 / MI-1) (Desulfotomaculum reducens).